We begin with the raw amino-acid sequence, 60 residues long: Large ribosomal subunit protein bL32 (60 aa).

Positions 1–23 (MAVPKRKKSKSRRNMHRSHHAIK) are disordered.

The protein belongs to the bacterial ribosomal protein bL32 family.

In Wolbachia pipientis subsp. Culex pipiens (strain wPip), this protein is Large ribosomal subunit protein bL32.